Reading from the N-terminus, the 1219-residue chain is FYVE, RhoGEF and PH domain-containing protein 5 (1219 aa).

Disordered regions lie at residues Met-1–Ile-85, Glu-94–Ser-113, Ser-201–Pro-227, and Gly-310–Val-367. Residues Glu-23 to Glu-50 show a composition bias toward acidic residues. The span at Ser-201 to Ser-214 shows a compositional bias: polar residues. Basic and acidic residues predominate over residues Arg-319–Asn-337. Over residues Ser-346 to Leu-356 the composition is skewed to polar residues. A compositionally biased stretch (low complexity) spans Pro-357–Val-367. At Thr-555 the chain carries Phosphothreonine. Low complexity predominate over residues Glu-586 to Ala-599. The tract at residues Glu-586–Gly-644 is disordered. Acidic residues predominate over residues Thr-618 to Asp-630. The span at Ser-631 to Gly-644 shows a compositional bias: basic and acidic residues. One can recognise a DH domain in the interval Arg-647 to Ser-840. A PH 1 domain is found at Glu-869 to Pro-963. The segment at Val-998–Lys-1057 adopts an FYVE-type zinc-finger fold. Positions 1004, 1007, 1020, 1023, 1028, 1031, 1049, and 1052 each coordinate Zn(2+). The region spanning Gly-1120 to Val-1218 is the PH 2 domain.

In terms of tissue distribution, expressed in highly vascularized tissues, such as lung, kidney and ovary.

Its subcellular location is the cytoplasm. The protein localises to the cytoskeleton. It is found in the cell projection. It localises to the ruffle membrane. The protein resides in the endoplasmic reticulum. Its subcellular location is the golgi apparatus. The protein localises to the early endosome. Activates CDC42, a member of the Ras-like family of Rho- and Rac proteins, by exchanging bound GDP for free GTP. Mediates VEGF-induced CDC42 activation. May regulate proangiogenic action of VEGF in vascular endothelial cells, including network formation, directional movement and proliferation. May play a role in regulating the actin cytoskeleton and cell shape. This Mus musculus (Mouse) protein is FYVE, RhoGEF and PH domain-containing protein 5 (Fgd5).